The chain runs to 482 residues: UDP-N-acetylmuramate--L-alanine ligase (482 aa).

123–129 serves as a coordination point for ATP; it reads GTHGKTT.

Belongs to the MurCDEF family.

It localises to the cytoplasm. The enzyme catalyses UDP-N-acetyl-alpha-D-muramate + L-alanine + ATP = UDP-N-acetyl-alpha-D-muramoyl-L-alanine + ADP + phosphate + H(+). Its pathway is cell wall biogenesis; peptidoglycan biosynthesis. Functionally, cell wall formation. This is UDP-N-acetylmuramate--L-alanine ligase from Pseudomonas putida (strain ATCC 700007 / DSM 6899 / JCM 31910 / BCRC 17059 / LMG 24140 / F1).